Reading from the N-terminus, the 369-residue chain is RAB6-interacting golgin (369 aa).

The disordered stretch occupies residues 1–128; the sequence is MAQGWAGFSE…HNNVEILPPK (128 aa). The span at 11–27 shows a compositional bias: basic and acidic residues; that stretch reads EELRRLKQTKDPFEPQR. Polar residues-rich tracts occupy residues 46 to 61 and 82 to 93; these read EQSQKLGLQDGSTSLL and SPTLPSHFTLTS. Residues 106–120 are compositionally biased toward basic and acidic residues; it reads QPKELGLENSHDGHN. A coiled-coil region spans residues 145–297; sequence RWEVLQQEQR…EVERLLHEQE (153 aa). Positions 188 to 369 are necessary for interaction with RCHY1; the sequence is IQKELQALDD…GNDISAALAT (182 aa). Positions 334–369 are disordered; it reads VSPKVDDQCGNSSSIPFLSPNCPNQEGNDISAALAT. Residues 342–361 are compositionally biased toward polar residues; the sequence is CGNSSSIPFLSPNCPNQEGN.

This sequence belongs to the GORAB family. Interacts with SCYL1. Interacts with RCHY1 and RAB6A/RAB6.

Its subcellular location is the cytoplasm. It is found in the golgi apparatus. The sequence is that of RAB6-interacting golgin (GORAB) from Homo sapiens (Human).